We begin with the raw amino-acid sequence, 317 residues long: WSCD family member CG9164 (317 aa).

A helical transmembrane segment spans residues 8–28 (FFGVSATIIIYIGGVLFLSMN). Residues N151, N227, and N233 are each glycosylated (N-linked (GlcNAc...) asparagine).

This sequence belongs to the WSCD family.

It is found in the membrane. This is WSCD family member CG9164 from Drosophila melanogaster (Fruit fly).